We begin with the raw amino-acid sequence, 261 residues long: Putative cytochrome YdhU (261 aa).

Residues 25–45 form a helical membrane-spanning segment; the sequence is FWPVWLIIAGVLLVGMWLVLG. H77 is a heme b binding site. Transmembrane regions (helical) follow at residues 81 to 101, 108 to 128, and 182 to 202; these read ALLF…MVGA, VAVH…FVLI, and VAYV…GLLC. Residue H111 participates in heme b binding. Heme b-binding residues include H223 and H237. A helical membrane pass occupies residues 224–244; it reads FALAFISLFFIFGHLYLCTTG. H237 is a binding site for a menaquinone.

This sequence belongs to the PhsC family. The cofactor is heme.

The protein resides in the cell inner membrane. In Escherichia coli (strain K12), this protein is Putative cytochrome YdhU (ydhU).